The sequence spans 335 residues: NADH-quinone oxidoreductase subunit H (335 aa).

A run of 8 helical transmembrane segments spans residues 11–31, 81–101, 114–134, 154–174, 187–207, 238–258, 270–290, and 309–329; these read VIIS…AGAL, VIFT…FAVI, IGLL…LFAG, VSYE…VGSF, LWFI…GVAV, FFVG…TLFF, QLAF…FILL, and FCLP…LLNT.

This sequence belongs to the complex I subunit 1 family. In terms of assembly, NDH-1 is composed of 13 different subunits. Subunits NuoA, H, J, K, L, M, N constitute the membrane sector of the complex.

The protein resides in the cell inner membrane. It carries out the reaction a quinone + NADH + 5 H(+)(in) = a quinol + NAD(+) + 4 H(+)(out). Functionally, NDH-1 shuttles electrons from NADH, via FMN and iron-sulfur (Fe-S) centers, to quinones in the respiratory chain. The immediate electron acceptor for the enzyme in this species is believed to be ubiquinone. Couples the redox reaction to proton translocation (for every two electrons transferred, four hydrogen ions are translocated across the cytoplasmic membrane), and thus conserves the redox energy in a proton gradient. This subunit may bind ubiquinone. This Pseudomonas fluorescens (strain SBW25) protein is NADH-quinone oxidoreductase subunit H.